We begin with the raw amino-acid sequence, 1073 residues long: Carbamoyl phosphate synthase large chain (1073 aa).

A carboxyphosphate synthetic domain region spans residues 2–403; it reads PKRTDIKSIL…SVQKALRGLE (402 aa). ATP is bound by residues Arg129, Arg169, Gly175, Gly176, Glu208, Leu210, Glu215, Gly241, Val242, His243, Gln285, and Glu299. The ATP-grasp 1 domain maps to 133 to 328; sequence DKAMKDIGLA…IAKIAAKLAV (196 aa). Mg(2+)-binding residues include Gln285, Glu299, and Asn301. Positions 285, 299, and 301 each coordinate Mn(2+). An oligomerization domain region spans residues 404–553; it reads VGATGFDPKL…YSTYEEECEA (150 aa). Positions 554-935 are carbamoyl phosphate synthetic domain; sequence NPSSREKIMI…AFAKAQLGAS (382 aa). In terms of domain architecture, ATP-grasp 2 spans 678-869; sequence QQMVQRLNLR…LAKVAARVMA (192 aa). ATP-binding residues include Arg714, His753, Leu755, Glu760, Gly785, Val786, His787, Ser788, Gln828, and Glu840. The Mg(2+) site is built by Gln828, Glu840, and Asn842. 3 residues coordinate Mn(2+): Gln828, Glu840, and Asn842. Positions 936 to 1073 constitute an MGS-like domain; the sequence is EILPTAGCAF…LQDLHAGIKA (138 aa). An allosteric domain region spans residues 936-1073; sequence EILPTAGCAF…LQDLHAGIKA (138 aa).

It belongs to the CarB family. In terms of assembly, composed of two chains; the small (or glutamine) chain promotes the hydrolysis of glutamine to ammonia, which is used by the large (or ammonia) chain to synthesize carbamoyl phosphate. Tetramer of heterodimers (alpha,beta)4. The cofactor is Mg(2+). Mn(2+) is required as a cofactor.

The catalysed reaction is hydrogencarbonate + L-glutamine + 2 ATP + H2O = carbamoyl phosphate + L-glutamate + 2 ADP + phosphate + 2 H(+). It carries out the reaction hydrogencarbonate + NH4(+) + 2 ATP = carbamoyl phosphate + 2 ADP + phosphate + 2 H(+). It participates in amino-acid biosynthesis; L-arginine biosynthesis; carbamoyl phosphate from bicarbonate: step 1/1. It functions in the pathway pyrimidine metabolism; UMP biosynthesis via de novo pathway; (S)-dihydroorotate from bicarbonate: step 1/3. Functionally, large subunit of the glutamine-dependent carbamoyl phosphate synthetase (CPSase). CPSase catalyzes the formation of carbamoyl phosphate from the ammonia moiety of glutamine, carbonate, and phosphate donated by ATP, constituting the first step of 2 biosynthetic pathways, one leading to arginine and/or urea and the other to pyrimidine nucleotides. The large subunit (synthetase) binds the substrates ammonia (free or transferred from glutamine from the small subunit), hydrogencarbonate and ATP and carries out an ATP-coupled ligase reaction, activating hydrogencarbonate by forming carboxy phosphate which reacts with ammonia to form carbamoyl phosphate. The protein is Carbamoyl phosphate synthase large chain of Pseudomonas aeruginosa (strain ATCC 15692 / DSM 22644 / CIP 104116 / JCM 14847 / LMG 12228 / 1C / PRS 101 / PAO1).